A 2615-amino-acid polypeptide reads, in one-letter code: Polycystin-1-like protein 1 (2615 aa).

Residues 1-1524 (MDVDEDQHAV…VSSISEFQSH (1524 aa)) are Extracellular-facing. Residues 17–93 (IQANPELCVS…GTNSFSNPPP (77 aa)) are disordered. N-linked (GlcNAc...) asparagine glycans are attached at residues Asn224, Asn297, Asn306, Asn390, Asn440, Asn534, and Asn619. PKD domains are found at residues 291-373 (SVSV…VQKR) and 375-456 (MANR…VREP). The region spanning 457 to 1349 (CQPPPVKNMG…GEEDYLHKRN (893 aa)) is the REJ domain. The disordered stretch occupies residues 749 to 815 (SSKSDLPSNL…GEPMEEYSSL (67 aa)). The span at 778 to 789 (ALSNLGSISAES) shows a compositional bias: polar residues. The 149-residue stretch at 1364-1512 (RFTGLSENSQ…SVLRRKLNAT (149 aa)) folds into the GAIN-B domain. Asn1458 is a glycosylation site (N-linked (GlcNAc...) asparagine). Cys1468 and Cys1494 are disulfide-bonded. The tract at residues 1468–1512 (CVFWDKTEWRSEGPYPQPGSSPEKVNCSYHHLAPVSVLRRKLNAT) is GPS. An N-linked (GlcNAc...) asparagine glycan is attached at Asn1510. The helical transmembrane segment at 1525–1545 (PHNLLPGIFSAFLLVLYGILV) threads the bilayer. Residues 1546-1732 (SKSRYVDCHE…PPSRSYLHTQ (187 aa)) are Cytoplasmic-facing. A PLAT domain is found at 1573–1690 (QLYAVVIDTG…LGGHVLREFF (118 aa)). A helical transmembrane segment spans residues 1733-1753 (RLAVSFCLLCVYSCLTALVTV). The Extracellular segment spans residues 1754–1772 (RDHQQRPLDVGPTAITLEP). The chain crosses the membrane as a helical span at residues 1773 to 1793 (FCMALLCTLLACPVAQLLSLL). Topologically, residues 1794-1905 (FRCSKEARGD…ELGSQKSRVC (112 aa)) are cytoplasmic. The segment at 1807–1840 (STQWPLRGVKTETPQGHDSSGRPDSRQPSPHPTS) is disordered. Residues 1906 to 1926 (LLWSSSVAWAISGSASLACGL) traverse the membrane as a helical segment. Topologically, residues 1927–1950 (GTGFLGYWFVPAQCMWWLYLLLLS) are extracellular. Residues 1951–1971 (LVCCAFITQPLMICLAALVFA) traverse the membrane as a helical segment. The Cytoplasmic segment spans residues 1972–2057 (WKRKHDSKFF…ERLRRESIMQ (86 aa)). The chain crosses the membrane as a helical span at residues 2058–2078 (AALRDMTTHSIMLLLLLFIAY). At 2079–2288 (GRFCPGEISL…IFYSDSALKY (210 aa)) the chain is on the extracellular side. A helical transmembrane segment spans residues 2289–2309 (LLMLSELLFLVLNVIHLCFQL). Over 2310-2332 (WGMTTKGILSYWRKPRHWLELSM) the chain is Cytoplasmic. Residues 2333–2353 (VGVAIAYYAASGHLTTLAVNI) form a helical membrane-spanning segment. At 2354–2379 (TDQFHKGLYQRLVDIGLMVSWHQRAR) the chain is on the extracellular side. A helical transmembrane segment spans residues 2380–2400 (CLQGILLFLWMLKYVHLLSSL). The Cytoplasmic portion of the chain corresponds to 2401–2405 (STMTP). A helical membrane pass occupies residues 2406–2426 (FSAVTCFPLFRVLLVGALLLA). Residues 2427–2483 (AHYHSRWFLLFTGTLSHGTSAEAFPGLLLQFPGRSKKDSWHNCLKSDHGVMRCYYGT) are Extracellular-facing. Residues 2484-2504 (LFLLLATLGFRMLRATFLTVF) traverse the membrane as a helical segment. Over 2505–2615 (QNRKSSHRKP…VSGPLAAESE (111 aa)) the chain is Cytoplasmic. The disordered stretch occupies residues 2589–2615 (RAGDSPPVGSSEYQATGVSGPLAAESE).

It belongs to the polycystin family. As to quaternary structure, heterodimer. Interacts with PKD2 to form a calcium channel. Interacts with PKD2L1; to form ciliary calcium channel. May interact with GNA12, GNAS, GNAI1 and GNAI2. As to expression, in testis, strong expression in Leydig cells, low level in seminal ducts, myoid cells and tunica vaginalis. Other tissues, including adrenal gland and heart myocardium, also show low expression. In embryo, highly expressed in the node.

The protein localises to the cell projection. It is found in the cilium membrane. Functionally, component of a calcium-permeant ion channel formed by PKD1L2 and PKD1L1 in primary cilia, where it controls cilium calcium concentration, without affecting cytoplasmic calcium concentration, and regulates sonic hedgehog/SHH signaling and GLI2 transcription. The PKD1L1:PKD2L1 channel complex is mechanosensitive only at high pressures and is highly temperature sensitive. Also involved in left/right axis specification downstream of nodal flow by forming a complex with PKD2 in cilia to facilitate flow detection in left/right patterning. May function as a G-protein-coupled receptor. This is Polycystin-1-like protein 1 from Mus musculus (Mouse).